A 268-amino-acid chain; its full sequence is MSSEQLQADQVPTKAGIAYKVRNMAFFYGTKKALDNISVDLPAKSVTAIIGPSGCGKSTFIKALNRIAEAETKVRIDGQIELFGQNIYDPKVNITRLRRRVGMVFQRPNPFPMTIYDNITYGPRVFGFKGNYDEIVETSLRRAALWNEVKDKVKTSALGLSGGQQQRLCIARSLAVNPDVLLMDEPCSALDPIATLRIEELIETLRDQFTIIIVTHNMQQAGRVSQNTLFFNTDESRIGQLVENGPTKEIFFSPKDKRTEDYISGRFG.

Positions Tyr-19–Ile-263 constitute an ABC transporter domain. Residue Gly-51–Ser-58 participates in ATP binding.

The protein belongs to the ABC transporter superfamily. Phosphate importer (TC 3.A.1.7) family. As to quaternary structure, the complex is composed of two ATP-binding proteins (PstB), two transmembrane proteins (PstC and PstA) and a solute-binding protein (PstS).

It localises to the cell inner membrane. It carries out the reaction phosphate(out) + ATP + H2O = ADP + 2 phosphate(in) + H(+). Part of the ABC transporter complex PstSACB involved in phosphate import. Responsible for energy coupling to the transport system. In Gloeobacter violaceus (strain ATCC 29082 / PCC 7421), this protein is Phosphate import ATP-binding protein PstB 2.